An 85-amino-acid chain; its full sequence is Large ribosomal subunit protein bL31B (85 aa).

Belongs to the bacterial ribosomal protein bL31 family. Type B subfamily. In terms of assembly, part of the 50S ribosomal subunit.

The chain is Large ribosomal subunit protein bL31B from Micrococcus luteus (strain ATCC 4698 / DSM 20030 / JCM 1464 / CCM 169 / CCUG 5858 / IAM 1056 / NBRC 3333 / NCIMB 9278 / NCTC 2665 / VKM Ac-2230) (Micrococcus lysodeikticus).